We begin with the raw amino-acid sequence, 101 residues long: Small ribosomal subunit protein uS14A (101 aa).

The interval 28–57 is disordered; the sequence is KDIIRSPSSAPEQRSTAQRALARQPRDASP. Residues 33 to 45 show a composition bias toward polar residues; sequence SPSSAPEQRSTAQ.

It belongs to the universal ribosomal protein uS14 family. As to quaternary structure, part of the 30S ribosomal subunit. Contacts proteins S3 and S10.

Its function is as follows. Binds 16S rRNA, required for the assembly of 30S particles and may also be responsible for determining the conformation of the 16S rRNA at the A site. This Mycobacterium bovis (strain ATCC BAA-935 / AF2122/97) protein is Small ribosomal subunit protein uS14A.